Here is a 314-residue protein sequence, read N- to C-terminus: 2,3-dihydroxyphenylpropionate/2,3-dihydroxicinnamic acid 1,2-dioxygenase (314 aa).

The active-site Proton donor is His-115. The active-site Proton acceptor is the His-179.

It belongs to the LigB/MhpB extradiol dioxygenase family. As to quaternary structure, homotetramer. Fe(2+) serves as cofactor.

It catalyses the reaction 3-(2,3-dihydroxyphenyl)propanoate + O2 = (2Z,4E)-2-hydroxy-6-oxonona-2,4-dienedioate + H(+). The catalysed reaction is (2E)-3-(2,3-dihydroxyphenyl)prop-2-enoate + O2 = (2Z,4E,7E)-2-hydroxy-6-oxonona-2,4,7-trienedioate + H(+). The protein operates within aromatic compound metabolism; 3-phenylpropanoate degradation. Its function is as follows. Catalyzes the non-heme iron(II)-dependent oxidative cleavage of 2,3-dihydroxyphenylpropionic acid and 2,3-dihydroxicinnamic acid into 2-hydroxy-6-ketononadienedioate and 2-hydroxy-6-ketononatrienedioate, respectively. The polypeptide is 2,3-dihydroxyphenylpropionate/2,3-dihydroxicinnamic acid 1,2-dioxygenase (Escherichia coli O81 (strain ED1a)).